Here is a 434-residue protein sequence, read N- to C-terminus: Glutamyl-tRNA reductase (434 aa).

Residues 49–52 (TCNR), Ser114, 119–121 (EPQ), and Gln125 each bind substrate. The active-site Nucleophile is Cys50. 199–204 (GAGETI) provides a ligand contact to NADP(+).

It belongs to the glutamyl-tRNA reductase family. As to quaternary structure, homodimer.

It catalyses the reaction (S)-4-amino-5-oxopentanoate + tRNA(Glu) + NADP(+) = L-glutamyl-tRNA(Glu) + NADPH + H(+). It functions in the pathway porphyrin-containing compound metabolism; protoporphyrin-IX biosynthesis; 5-aminolevulinate from L-glutamyl-tRNA(Glu): step 1/2. In terms of biological role, catalyzes the NADPH-dependent reduction of glutamyl-tRNA(Glu) to glutamate 1-semialdehyde (GSA). This Pasteurella multocida (strain Pm70) protein is Glutamyl-tRNA reductase.